We begin with the raw amino-acid sequence, 390 residues long: Cystathionine beta-lyase (390 aa).

The residue at position 202 (K202) is an N6-(pyridoxal phosphate)lysine.

It belongs to the trans-sulfuration enzymes family. Requires pyridoxal 5'-phosphate as cofactor.

The protein localises to the cytoplasm. It localises to the nucleus. The catalysed reaction is L,L-cystathionine + H2O = L-homocysteine + pyruvate + NH4(+). It carries out the reaction an S-substituted L-cysteine + H2O = a thiol + pyruvate + NH4(+). The protein operates within amino-acid biosynthesis; L-methionine biosynthesis via de novo pathway; L-homocysteine from L-cystathionine: step 1/1. This chain is Cystathionine beta-lyase (str3), found in Schizosaccharomyces pombe (strain 972 / ATCC 24843) (Fission yeast).